Here is a 488-residue protein sequence, read N- to C-terminus: Phenylalanine--tRNA ligase alpha subunit (488 aa).

Residues Thr332, 371 to 373 (QLD), and Phe410 each bind L-phenylalanine. Glu412 is a binding site for Mg(2+). Phe435 contributes to the L-phenylalanine binding site.

The protein belongs to the class-II aminoacyl-tRNA synthetase family. Phe-tRNA synthetase alpha subunit type 2 subfamily. In terms of assembly, tetramer of two alpha and two beta subunits. Requires Mg(2+) as cofactor.

The protein resides in the cytoplasm. It carries out the reaction tRNA(Phe) + L-phenylalanine + ATP = L-phenylalanyl-tRNA(Phe) + AMP + diphosphate + H(+). This chain is Phenylalanine--tRNA ligase alpha subunit, found in Aeropyrum pernix (strain ATCC 700893 / DSM 11879 / JCM 9820 / NBRC 100138 / K1).